A 253-amino-acid chain; its full sequence is MGGRKWQSIKRQKARVDAQKGKTTTQLSRAIIVAARQGIPDPAGNFQLRTAIEKARAAGVPNDSIDRAIAKGAGTYEDGESNYEEMRYEGYGPGGVAVLIEALTDNRNRTAADLRAAFSKKGGNLGETGCVSWMFSQKGVIRLVGELEEEKLLEALLEGEGESYEWLDEEDGGGVEVFSAVNQLENLNQVLQNHGFTIAETELRWLPENTIEIAEPDQAKALMQMIDTLESLDDVQSVTSNFELTEELLALAG.

The tract at residues 1–22 is disordered; sequence MGGRKWQSIKRQKARVDAQKGK.

This sequence belongs to the TACO1 family.

The protein resides in the cytoplasm. This chain is Probable transcriptional regulatory protein slr0989, found in Synechocystis sp. (strain ATCC 27184 / PCC 6803 / Kazusa).